The primary structure comprises 341 residues: GTP-binding protein REM 2 (341 aa).

The segment covering 1–13 has biased composition (acidic residues); it reads MHTDLDTDMDMDT. Disordered stretches follow at residues 1–71 and 84–106; these read MHTD…GSMP and VDEL…GSGE. Positions 18–30 are enriched in polar residues; it reads LCSSSSRQASPLG. Serine 27 carries the phosphoserine modification. Residues 90 to 106 show a composition bias toward low complexity; sequence PPQASPSGSSDSLGSGE. Residues 122-129, 230-233, and 261-262 contribute to the GTP site; these read GESGVGKS, NKSD, and AA. A disordered region spans residues 282–309; it reads RGRGHAGGQRPEPSSPDGPAPPTRRESL. Pro residues predominate over residues 294 to 303; the sequence is PSSPDGPAPP. Position 296 is a phosphoserine (serine 296).

It belongs to the small GTPase superfamily. RGK family.

It localises to the cell membrane. In terms of biological role, binds GTP saturably and exhibits a low intrinsic rate of GTP hydrolysis. The polypeptide is GTP-binding protein REM 2 (Rem2) (Mus musculus (Mouse)).